The sequence spans 82 residues: Turripeptide Gsg9.1 (82 aa).

A signal peptide spans 1-23 (MMAKLMITVMTVFFLSLQQGADG). A propeptide spanning residues 24–46 (LFERWRKNQMAASRIMGNLITAR) is cleaved from the precursor. 4-hydroxyproline is present on residues Pro-49 and Pro-50. 3 cysteine pairs are disulfide-bonded: Cys-53/Cys-68, Cys-58/Cys-72, and Cys-64/Cys-79. Glu-60 and Glu-63 each carry 4-carboxyglutamate.

This sequence belongs to the Pg turripeptide superfamily. As to expression, expressed by the venom duct.

It localises to the secreted. This chain is Turripeptide Gsg9.1, found in Gemmula sogodensis (Gem-turris).